The following is a 66-amino-acid chain: MKAKFKVLIPEPKSKFIRIKCPNCGNEQTVFSHATFPVRCLSCGTQLVYPRGGKAKIVGETVRILG.

Zn(2+) is bound by residues C21, C24, C40, and C43. The C4-type zinc-finger motif lies at C21–C43.

Belongs to the eukaryotic ribosomal protein eS27 family. In terms of assembly, part of the 30S ribosomal subunit. Requires Zn(2+) as cofactor.

This is Small ribosomal subunit protein eS27 from Sulfurisphaera tokodaii (strain DSM 16993 / JCM 10545 / NBRC 100140 / 7) (Sulfolobus tokodaii).